A 102-amino-acid chain; its full sequence is MAGQAFRKFLPLFDRVLVERSAAETVTKGGIMLPEKSQGKVLQATVVAVGSGGKGKGGEIQPVSVKVGDKVLLPEYGGTKVVLDDKDYFLFRDGDILGKYVD.

At alanine 2 the chain carries N-acetylalanine. N6-acetyllysine is present on lysine 8. An N6-succinyllysine modification is found at lysine 28. At lysine 40 the chain carries N6-acetyllysine; alternate. 3 positions are modified to N6-malonyllysine; alternate: lysine 40, lysine 54, and lysine 56. N6-succinyllysine; alternate is present on residues lysine 40, lysine 54, lysine 56, lysine 66, and lysine 70. 3 positions are modified to N6-acetyllysine; alternate: lysine 56, lysine 66, and lysine 70. Residue threonine 79 is modified to Phosphothreonine. N6-acetyllysine; alternate occurs at positions 80 and 86. N6-succinyllysine; alternate is present on residues lysine 80 and lysine 86. Lysine 99 carries the N6-acetyllysine modification.

This sequence belongs to the GroES chaperonin family. As to quaternary structure, homoheptamer arranged in a ring structure. 2 heptameric Hsp10 rings interact with a Hsp60 tetradecamer in the structure of a back-to-back double heptameric ring to form the symmetrical football complex.

It is found in the mitochondrion matrix. Functionally, co-chaperonin implicated in mitochondrial protein import and macromolecular assembly. Together with Hsp60, facilitates the correct folding of imported proteins. May also prevent misfolding and promote the refolding and proper assembly of unfolded polypeptides generated under stress conditions in the mitochondrial matrix. The functional units of these chaperonins consist of heptameric rings of the large subunit Hsp60, which function as a back-to-back double ring. In a cyclic reaction, Hsp60 ring complexes bind one unfolded substrate protein per ring, followed by the binding of ATP and association with 2 heptameric rings of the co-chaperonin Hsp10. This leads to sequestration of the substrate protein in the inner cavity of Hsp60 where, for a certain period of time, it can fold undisturbed by other cell components. Synchronous hydrolysis of ATP in all Hsp60 subunits results in the dissociation of the chaperonin rings and the release of ADP and the folded substrate protein. The polypeptide is 10 kDa heat shock protein, mitochondrial (Hspe1) (Rattus norvegicus (Rat)).